We begin with the raw amino-acid sequence, 757 residues long: Transcription regulator rua1 (757 aa).

5 disordered regions span residues 122–169, 181–218, 237–295, 372–393, and 422–582; these read SSGS…LPVS, NHQV…SNQD, RNTG…NGYT, SADC…PYPL, and MELQ…IGNA. Residues 125–165 show a composition bias toward low complexity; that stretch reads SATKSEPSTCSSSTDFSMSSTADASTAPQHSSSGDSSMSSG. 2 stretches are compositionally biased toward polar residues: residues 181-190 and 200-218; these read NHQVTTQDAS and QPPS…SNQD. Positions 240–249 are enriched in basic residues; it reads GHRQHNRHQK. Over residues 253-277 the composition is skewed to polar residues; the sequence is LPQGQSCTNSGSSSRQVTRPNSPNH. Positions 379-393 are enriched in pro residues; sequence PRPPSNSPEPHPYPL. A compositionally biased stretch (polar residues) spans 428 to 437; that stretch reads PARSNSTFGR. Basic residues predominate over residues 439–453; sequence SQRHHQPPPSHRQRS. Composition is skewed to low complexity over residues 454–465, 494–510, and 543–582; these read RTSASSISNTNA, ASQS…ATDA, and TSSS…IGNA. Residues 661-692 form a C2H2-type 1 degenerate zinc finger; it reads REGWCSLCPQGEWYSMKRSQYLYHMQFDHGIS. The C2H2-type 2; degenerate zinc finger occupies 717-750; it reads GLCHHCNKWIPICFGPQRKRDFKAWFKHARKCHR.

Its subcellular location is the nucleus. Functionally, transcription factor; part of the gene cluster that mediates the biosynthesis of the glycolipid biosurfactant ustilagic acid (UA). UA is a secreted cellobiose glycolipid that is toxic for many microorganisms and confers biocontrol activity to U.maydis. Recognizes and binds to the specific 5'-T/G-G/T-C-G-C-A-T-A/T-C/T-C/T-G/A-3' upstream activating sequence found in all promoters of the UA biosynthesis genes. The chain is Transcription regulator rua1 from Mycosarcoma maydis (Corn smut fungus).